A 668-amino-acid chain; its full sequence is Penicillin-binding protein 3 (668 aa).

The helical transmembrane segment at Leu7 to Lys23 threads the bilayer. The active-site Acyl-ester intermediate is the Ser410.

It belongs to the transpeptidase family.

The protein resides in the cell membrane. The protein localises to the forespore inner membrane. It localises to the forespore outer membrane. Its subcellular location is the membrane raft. It catalyses the reaction Preferential cleavage: (Ac)2-L-Lys-D-Ala-|-D-Ala. Also transpeptidation of peptidyl-alanyl moieties that are N-acyl substituents of D-alanine.. It participates in cell wall biogenesis; peptidoglycan biosynthesis. Its function is as follows. Penicillin-binding proteins (PBPs) function in the late steps of murein biosynthesis. Probably required for both cortical and vegetative peptidoglycan synthesis. Although not usually required for cell division, in the absence of PBP 2B (pbpB) it becomes essential. Confers resistance to oxacillin and cephalexin. The polypeptide is Penicillin-binding protein 3 (Bacillus subtilis (strain 168)).